The primary structure comprises 220 residues: Urease accessory protein UreF (220 aa).

The protein belongs to the UreF family. In terms of assembly, ureD, UreF and UreG form a complex that acts as a GTP-hydrolysis-dependent molecular chaperone, activating the urease apoprotein by helping to assemble the nickel containing metallocenter of UreC. The UreE protein probably delivers the nickel.

It localises to the cytoplasm. Its function is as follows. Required for maturation of urease via the functional incorporation of the urease nickel metallocenter. This Bordetella bronchiseptica (strain ATCC BAA-588 / NCTC 13252 / RB50) (Alcaligenes bronchisepticus) protein is Urease accessory protein UreF.